The primary structure comprises 249 residues: ATP synthase subunit a (249 aa).

The next 5 membrane-spanning stretches (helical) occupy residues 33-53, 92-112, 131-151, 196-216, and 217-237; these read GQVF…SLLA, VPFI…GALI, INTT…AGFS, LVVA…AMIL, and GLFT…SYIG.

The protein belongs to the ATPase A chain family. F-type ATPases have 2 components, CF(1) - the catalytic core - and CF(0) - the membrane proton channel. CF(1) has five subunits: alpha(3), beta(3), gamma(1), delta(1), epsilon(1). CF(0) has four main subunits: a, b, b' and c.

Its subcellular location is the cellular thylakoid membrane. Key component of the proton channel; it plays a direct role in the translocation of protons across the membrane. This Synechococcus elongatus (strain ATCC 33912 / PCC 7942 / FACHB-805) (Anacystis nidulans R2) protein is ATP synthase subunit a.